The following is a 174-amino-acid chain: UPF0340 protein MW2038 (174 aa).

This sequence belongs to the UPF0340 family.

This chain is UPF0340 protein MW2038, found in Staphylococcus aureus (strain MW2).